Here is a 281-residue protein sequence, read N- to C-terminus: Phosphatidylglycerol--prolipoprotein diacylglyceryl transferase (281 aa).

The next 4 membrane-spanning stretches (helical) occupy residues valine 23–tryptophan 43, phenylalanine 71–tyrosine 91, tryptophan 107–phenylalanine 127, and isoleucine 133–valine 153. An a 1,2-diacyl-sn-glycero-3-phospho-(1'-sn-glycerol)-binding site is contributed by arginine 154. Transmembrane regions (helical) follow at residues leucine 189–valine 209, glycine 217–phenylalanine 237, and leucine 247–leucine 267.

The protein belongs to the Lgt family.

Its subcellular location is the cell inner membrane. The enzyme catalyses L-cysteinyl-[prolipoprotein] + a 1,2-diacyl-sn-glycero-3-phospho-(1'-sn-glycerol) = an S-1,2-diacyl-sn-glyceryl-L-cysteinyl-[prolipoprotein] + sn-glycerol 1-phosphate + H(+). It participates in protein modification; lipoprotein biosynthesis (diacylglyceryl transfer). Its function is as follows. Catalyzes the transfer of the diacylglyceryl group from phosphatidylglycerol to the sulfhydryl group of the N-terminal cysteine of a prolipoprotein, the first step in the formation of mature lipoproteins. The chain is Phosphatidylglycerol--prolipoprotein diacylglyceryl transferase from Brucella anthropi (strain ATCC 49188 / DSM 6882 / CCUG 24695 / JCM 21032 / LMG 3331 / NBRC 15819 / NCTC 12168 / Alc 37) (Ochrobactrum anthropi).